We begin with the raw amino-acid sequence, 157 residues long: Deoxyuridine 5'-triphosphate nucleotidohydrolase (157 aa).

Positions 63, 76, 79, 82, 87, 132, 137, and 138 each coordinate dUMP. The disordered stretch occupies residues 125 to 157; it reads NDLESTERGAGGFGSTGINDEKKRKLDEAEAKE. Basic and acidic residues predominate over residues 143-157; sequence NDEKKRKLDEAEAKE.

This sequence belongs to the dUTPase family. In terms of assembly, homotrimer. The cofactor is Mg(2+).

It carries out the reaction dUTP + H2O = dUMP + diphosphate + H(+). It functions in the pathway pyrimidine metabolism; dUMP biosynthesis; dUMP from dCTP (dUTP route): step 2/2. In terms of biological role, involved in nucleotide metabolism via production of dUMP, the immediate precursor of thymidine nucleotides, and decreases the intracellular concentration of dUTP so that uracil cannot be incorporated into DNA. The polypeptide is Deoxyuridine 5'-triphosphate nucleotidohydrolase (DUT1) (Yarrowia lipolytica (strain CLIB 122 / E 150) (Yeast)).